Reading from the N-terminus, the 466-residue chain is MTVRTRFAPSPTGLLHIGNARAALFNFLYARHHGGKFLLRIEDTDRERSTQQAVDVLFDGLAWMGITPDEEPVFQSTRQARHAEIAHHLLAQGLAYRCYCTPEELQQMRDQAAAEGRPPRYNGYWRDRDPSEAPAGAPYTVRIRAPREGETVIHDLVQGDVRVANAELDDMIILRGDGTPVYQLAVVVDDHDMDITHVIRGDDHLTNTFRQAMIYRAMGWDLPAFAHLPLIHGPDGAKLSKRHGAQSVVEFREMGYLPEALNNYLLRLGWGHGDAEILSRDEQIQLFDLDGVGRSASRMDYVKLQHLNGVWLRQADDARLTDDIVARLADRPDVSVDEAVRARILALMPGLKERAKTLVDLADSAAFLGRHVPLAFDAKAEKLLTPEARAMLGELARDLAVIEPFDAPAIDVALRRFAEHHGHKLGQVAQPLRAAMTGGATSPGIDATLAALGRDEVMARIGAVAR.

The 'HIGH' region motif lies at 9–19; the sequence is PSPTGLLHIGN. Positions 238 to 242 match the 'KMSKS' region motif; sequence KLSKR. K241 serves as a coordination point for ATP.

Belongs to the class-I aminoacyl-tRNA synthetase family. Glutamate--tRNA ligase type 1 subfamily. In terms of assembly, monomer.

It is found in the cytoplasm. The catalysed reaction is tRNA(Glu) + L-glutamate + ATP = L-glutamyl-tRNA(Glu) + AMP + diphosphate. Functionally, catalyzes the attachment of glutamate to tRNA(Glu) in a two-step reaction: glutamate is first activated by ATP to form Glu-AMP and then transferred to the acceptor end of tRNA(Glu). This chain is Glutamate--tRNA ligase 1, found in Gluconacetobacter diazotrophicus (strain ATCC 49037 / DSM 5601 / CCUG 37298 / CIP 103539 / LMG 7603 / PAl5).